Consider the following 980-residue polypeptide: Serine/threonine-protein phosphatase 4 regulatory subunit 3 (980 aa).

The WH1 domain maps to 1–105; sequence MTTDTRRRVK…EKICQVQGKD (105 aa). Disordered regions lie at residues 640–668, 695–861, and 885–980; these read RDKMENRTDGGLPIIRSGGRFRRDQRQME, VSEK…SLCD, and VTAA…ARQA. The segment covering 695 to 708 has biased composition (polar residues); it reads VSEKNGPQTQNQQK. 4 stretches are compositionally biased toward low complexity: residues 709–749, 757–789, 803–859, and 885–926; these read SSPP…SSSP, QTQAAVHLAAAALQHHQQQQQQQQQNPFQQQTQ, EAPQ…AASL, and VTAA…SPAS. The span at 929–939 shows a compositional bias: polar residues; the sequence is QDANSTEGTSS. A compositionally biased stretch (basic and acidic residues) spans 940–951; it reads EADKTTAKKGLV. The segment covering 953 to 968 has biased composition (acidic residues); it reads YESDSGEDDYEEDEYS.

It belongs to the SMEK family. As to quaternary structure, serine/threonine-protein phosphatase 4 (PP4) occurs in different assemblies of the catalytic and one or more regulatory subunits. Probably part of a PP4 PPP4C-PPP4R2-PPP4R3 complex containing Pp4-19C, PPP4R2r and flfl. Interacts with mira. In terms of tissue distribution, expressed in neuroblasts.

Its subcellular location is the nucleus. It is found in the membrane. It localises to the cytoplasm. In terms of biological role, regulatory subunit of serine/threonine-protein phosphatase 4. The probable PP4 complex Pp4-19C-PPP4R2r-flfl (PPP4C-PPP4R2-PPP4R3) is required to prevent caspase induced cell death (in vitro). May be involved in DNA damage repair. Key mediator specific for the localization of mira and associated cell fate determinants during both interphase and mitosis. Nuclear Flfl is required to exclude mira/pros from the nucleus when inefficiently bound to the cytoskeleton/cortex, whereas cytosolic or membrane-associated flfl is required for the cortical association and asymmetric localization of mira/pros/brat/stau at metaphase and anaphase. This Drosophila melanogaster (Fruit fly) protein is Serine/threonine-protein phosphatase 4 regulatory subunit 3 (flfl).